The sequence spans 20 residues: Ribulose bisphosphate carboxylase small subunit (20 aa).

This sequence belongs to the RuBisCO small chain family. Heterohexadecamer of 8 large and 8 small subunits.

The protein resides in the plastid. It is found in the chloroplast. Its function is as follows. RuBisCO catalyzes two reactions: the carboxylation of D-ribulose 1,5-bisphosphate, the primary event in carbon dioxide fixation, as well as the oxidative fragmentation of the pentose substrate in the photorespiration process. Both reactions occur simultaneously and in competition at the same active site. Although the small subunit is not catalytic it is essential for maximal activity. The chain is Ribulose bisphosphate carboxylase small subunit from Chattonella marina var. antiqua (Red tide flagellate).